We begin with the raw amino-acid sequence, 338 residues long: Cytoskeleton protein RodZ (338 aa).

The Cytoplasmic portion of the chain corresponds to 1–111 (MNTEATHEEN…LGKSRKKRDG (111 aa)). The HTH cro/C1-type domain occupies 19 to 71 (LRLAREQLGLSQQVVAERLCLKVSTVRDIEEDKAPADLASTFLRGYIRSYARL). The segment at residues 30-49 (QQVVAERLCLKVSTVRDIEE) is a DNA-binding region (H-T-H motif). Residues 112-132 (WLMSFTWLVLFVVVGLTGAWW) form a helical; Signal-anchor for type II membrane protein membrane-spanning segment. The Periplasmic segment spans residues 133–338 (WQNHKAQQEE…TLNAEQSVTQ (206 aa)). Composition is skewed to polar residues over residues 147–180 (ADQSSAELSQNAANSPQSVPLNTDNTADASQDQA) and 189–214 (GDTQNTASNNPQPTPVPSSNTASQQP). Residues 147-245 (ADQSSAELSQ…AQSQLPVGQA (99 aa)) form a disordered region. Over residues 220–239 (SQANTDTAAQQNTTQPAQSQ) the composition is skewed to low complexity.

It belongs to the RodZ family.

It is found in the cell inner membrane. Cytoskeletal protein that is involved in cell-shape control through regulation of the length of the long axis. This is Cytoskeleton protein RodZ from Cronobacter sakazakii (strain ATCC BAA-894) (Enterobacter sakazakii).